The sequence spans 104 residues: Flagellar hook-basal body complex protein FliE (104 aa).

This sequence belongs to the FliE family.

The protein localises to the bacterial flagellum basal body. The protein is Flagellar hook-basal body complex protein FliE of Escherichia fergusonii (strain ATCC 35469 / DSM 13698 / CCUG 18766 / IAM 14443 / JCM 21226 / LMG 7866 / NBRC 102419 / NCTC 12128 / CDC 0568-73).